We begin with the raw amino-acid sequence, 290 residues long: AA9 family lytic polysaccharide monooxygenase A (290 aa).

The signal sequence occupies residues 1–17; it reads MKLSLLASVALVPFVSA. Positions 18 and 101 each coordinate Cu(2+). Cysteines 67 and 189 form a disulfide. Residue His176 coordinates O2. Residue Tyr187 participates in Cu(2+) binding. Residues Asn220 and Asn254 are each glycosylated (N-linked (GlcNAc...) asparagine). A disordered region spans residues 240–290; the sequence is GGSGSGSSSYSKVANVTSSDESSQSGASSSQGTVSTCPNKYNRRHARQFKP. A compositionally biased stretch (low complexity) spans 245-275; that stretch reads GSSSYSKVANVTSSDESSQSGASSSQGTVST. The segment covering 280–290 has biased composition (basic residues); sequence YNRRHARQFKP.

Belongs to the polysaccharide monooxygenase AA9 family. The cofactor is Cu(2+).

The protein resides in the secreted. It catalyses the reaction [(1-&gt;4)-beta-D-glucosyl]n+m + reduced acceptor + O2 = 4-dehydro-beta-D-glucosyl-[(1-&gt;4)-beta-D-glucosyl]n-1 + [(1-&gt;4)-beta-D-glucosyl]m + acceptor + H2O.. Functionally, lytic polysaccharide monooxygenase (LPMO) that depolymerizes crystalline and amorphous polysaccharides via the oxidation of scissile alpha- or beta-(1-4)-glycosidic bonds, yielding exclusively C1 oxidation products. Catalysis by LPMOs requires the reduction of the active-site copper from Cu(II) to Cu(I) by a reducing agent and H(2)O(2) or O(2) as a cosubstrate. This is AA9 family lytic polysaccharide monooxygenase A from Aspergillus fumigatus (strain ATCC MYA-4609 / CBS 101355 / FGSC A1100 / Af293) (Neosartorya fumigata).